Here is a 79-residue protein sequence, read N- to C-terminus: Acyl carrier protein (79 aa).

Residues 4 to 79 (EQILVDVQEA…DVVAYIETKL (76 aa)) form the Carrier domain. Position 39 is an O-(pantetheine 4'-phosphoryl)serine (serine 39).

This sequence belongs to the acyl carrier protein (ACP) family. In terms of processing, 4'-phosphopantetheine is transferred from CoA to a specific serine of apo-ACP by AcpS. This modification is essential for activity because fatty acids are bound in thioester linkage to the sulfhydryl of the prosthetic group.

It is found in the cytoplasm. The protein operates within lipid metabolism; fatty acid biosynthesis. In terms of biological role, carrier of the growing fatty acid chain in fatty acid biosynthesis. The protein is Acyl carrier protein of Exiguobacterium sp. (strain ATCC BAA-1283 / AT1b).